The sequence spans 73 residues: Aminopeptidase G (73 aa).

Residues 39–73 form a disordered region; sequence GRRAASSSWPGRGSSRRWRPGRRTGAAARGCWRAP. Composition is skewed to low complexity over residues 42–51 and 61–73; these read AASSSWPGRG and RTGA…WRAP.

Belongs to the peptidase M1 family. The cofactor is Zn(2+).

The protein localises to the cytoplasm. In terms of biological role, hydrolyzes preferentially the N-terminal glycine and can also hydrolyze other amino acids which are used by PepN but is unable to hydrolyze basic amino acids. The polypeptide is Aminopeptidase G (pepG) (Streptomyces lividans).